The following is a 376-amino-acid chain: Succinyl-diaminopimelate desuccinylase (376 aa).

His66 is a binding site for Zn(2+). Asp68 is an active-site residue. Position 99 (Asp99) interacts with Zn(2+). Glu133 (proton acceptor) is an active-site residue. Zn(2+)-binding residues include Glu134, Glu162, and His349.

It belongs to the peptidase M20A family. DapE subfamily. Homodimer. The cofactor is Zn(2+). Requires Co(2+) as cofactor.

It catalyses the reaction N-succinyl-(2S,6S)-2,6-diaminopimelate + H2O = (2S,6S)-2,6-diaminopimelate + succinate. Its pathway is amino-acid biosynthesis; L-lysine biosynthesis via DAP pathway; LL-2,6-diaminopimelate from (S)-tetrahydrodipicolinate (succinylase route): step 3/3. Functionally, catalyzes the hydrolysis of N-succinyl-L,L-diaminopimelic acid (SDAP), forming succinate and LL-2,6-diaminopimelate (DAP), an intermediate involved in the bacterial biosynthesis of lysine and meso-diaminopimelic acid, an essential component of bacterial cell walls. The protein is Succinyl-diaminopimelate desuccinylase of Vesicomyosocius okutanii subsp. Calyptogena okutanii (strain HA).